Here is a 111-residue protein sequence, read N- to C-terminus: Universal stress protein B (111 aa).

2 helical membrane-spanning segments follow: residues 1 to 21 (MIST…NMAR) and 90 to 110 (FILT…LMIW).

This sequence belongs to the universal stress protein B family.

Its subcellular location is the cell inner membrane. The protein is Universal stress protein B of Klebsiella pneumoniae (strain 342).